The following is a 232-amino-acid chain: MIGLIGKKLGMMRVFLNDGTAIPVTAIKVEPNYVVYIKSSETDGYNAIQVGSIPLKQSRFKKPMVGHFKKANLTPLKYLKEFRVDDVSSFALGQELGVDIFSPGELVDIVGRSKGRGFTGTMKRWDFGGFPKSHGHRYHRAVGSVGNRTDPGRVWKSKRMAGRHGNETIRVQALVVVDVLKDKGIILVNGSVPGHKDGIVYIEKSHIAFRKKAQRKQDRLSFIPSNLLRQEV.

It belongs to the universal ribosomal protein uL3 family. In terms of assembly, part of the 50S ribosomal subunit. Forms a cluster with proteins L14 and L19.

In terms of biological role, one of the primary rRNA binding proteins, it binds directly near the 3'-end of the 23S rRNA, where it nucleates assembly of the 50S subunit. The sequence is that of Large ribosomal subunit protein uL3 from Hydrogenobaculum sp. (strain Y04AAS1).